A 148-amino-acid chain; its full sequence is 3-dehydroquinate dehydratase (148 aa).

Tyr23 acts as the Proton acceptor in catalysis. Substrate-binding residues include Asn74, His80, and Asp87. The active-site Proton donor is His100. Residues 101–102 (IS) and Arg111 each bind substrate.

This sequence belongs to the type-II 3-dehydroquinase family. As to quaternary structure, homododecamer.

It carries out the reaction 3-dehydroquinate = 3-dehydroshikimate + H2O. Its pathway is metabolic intermediate biosynthesis; chorismate biosynthesis; chorismate from D-erythrose 4-phosphate and phosphoenolpyruvate: step 3/7. Its function is as follows. Catalyzes a trans-dehydration via an enolate intermediate. In Halothermothrix orenii (strain H 168 / OCM 544 / DSM 9562), this protein is 3-dehydroquinate dehydratase.